The sequence spans 279 residues: Movement protein (279 aa).

Residues 246-279 (SESEDLNVESPPAAIGSSSASRSEAFRPQVVNGL) form a disordered region. Positions 254-268 (ESPPAAIGSSSASRS) are enriched in low complexity.

Belongs to the cucumovirus movement protein family.

The protein localises to the host cell junction. It is found in the host plasmodesma. Functionally, transports viral genome to neighboring plant cells directly through plasmosdesmata, without any budding. The movement protein allows efficient cell to cell propagation, by bypassing the host cell wall barrier. Acts by forming a tubular structure at the host plasmodesmata, enlarging it enough to allow free passage of virion capsids. This Cucurbita pepo (Vegetable marrow) protein is Movement protein.